A 325-amino-acid chain; its full sequence is Porphobilinogen deaminase (325 aa).

Cys253 carries the post-translational modification S-(dipyrrolylmethanemethyl)cysteine.

Belongs to the HMBS family. The cofactor is dipyrromethane.

It carries out the reaction 4 porphobilinogen + H2O = hydroxymethylbilane + 4 NH4(+). It participates in porphyrin-containing compound metabolism; protoporphyrin-IX biosynthesis; coproporphyrinogen-III from 5-aminolevulinate: step 2/4. Tetrapolymerization of the monopyrrole PBG into the hydroxymethylbilane pre-uroporphyrinogen in several discrete steps. This chain is Porphobilinogen deaminase (hemC), found in Dictyostelium discoideum (Social amoeba).